The chain runs to 101 residues: NADH-quinone oxidoreductase subunit K (101 aa).

3 helical membrane passes run 2 to 22 (ISLN…LVGV), 29 to 49 (IMLF…LVAI), and 63 to 83 (MFII…LILW).

Belongs to the complex I subunit 4L family. NDH-1 is composed of 14 different subunits. Subunits NuoA, H, J, K, L, M, N constitute the membrane sector of the complex.

Its subcellular location is the cell inner membrane. The enzyme catalyses a quinone + NADH + 5 H(+)(in) = a quinol + NAD(+) + 4 H(+)(out). Functionally, NDH-1 shuttles electrons from NADH, via FMN and iron-sulfur (Fe-S) centers, to quinones in the respiratory chain. The immediate electron acceptor for the enzyme in this species is believed to be ubiquinone. Couples the redox reaction to proton translocation (for every two electrons transferred, four hydrogen ions are translocated across the cytoplasmic membrane), and thus conserves the redox energy in a proton gradient. This is NADH-quinone oxidoreductase subunit K from Campylobacter hominis (strain ATCC BAA-381 / DSM 21671 / CCUG 45161 / LMG 19568 / NCTC 13146 / CH001A).